Here is a 148-residue protein sequence, read N- to C-terminus: uncharacterized protein (148 aa).

This is an uncharacterized protein from Haemophilus influenzae (strain ATCC 51907 / DSM 11121 / KW20 / Rd).